The sequence spans 91 residues: Putative regulatory protein PTH_1796 (91 aa).

Belongs to the RemA family.

This Pelotomaculum thermopropionicum (strain DSM 13744 / JCM 10971 / SI) protein is Putative regulatory protein PTH_1796.